The chain runs to 379 residues: UDP-4-amino-4-deoxy-L-arabinose--oxoglutarate aminotransferase (379 aa).

N6-(pyridoxal phosphate)lysine is present on Lys-182.

The protein belongs to the DegT/DnrJ/EryC1 family. ArnB subfamily. Homodimer. Pyridoxal 5'-phosphate is required as a cofactor.

It catalyses the reaction UDP-4-amino-4-deoxy-beta-L-arabinose + 2-oxoglutarate = UDP-beta-L-threo-pentopyranos-4-ulose + L-glutamate. The protein operates within nucleotide-sugar biosynthesis; UDP-4-deoxy-4-formamido-beta-L-arabinose biosynthesis; UDP-4-deoxy-4-formamido-beta-L-arabinose from UDP-alpha-D-glucuronate: step 2/3. Its pathway is bacterial outer membrane biogenesis; lipopolysaccharide biosynthesis. Catalyzes the conversion of UDP-4-keto-arabinose (UDP-Ara4O) to UDP-4-amino-4-deoxy-L-arabinose (UDP-L-Ara4N). The modified arabinose is attached to lipid A and is required for resistance to polymyxin and cationic antimicrobial peptides. This is UDP-4-amino-4-deoxy-L-arabinose--oxoglutarate aminotransferase from Salmonella choleraesuis (strain SC-B67).